The primary structure comprises 337 residues: MNPQPLRPVIYDEGRDVVRVLDQRRLPSEEVWLDLASCDEVVQAIKDLTVRGAPAIGVAAAYGLALESRRGAEPARLREASERLVHARPTAVNLAWAVRRMSRRLGLGPAALLEEAHAIRDEDEAACRRIGALGAALLPPRASVLTHCNAGALATAGYGTALGVVRAAVEGGNPVTVFADETRPFLQGARLTAWELKRDGIPVTLLTDNMAGWLMAQGEIACVVVGADRIAANGDVANKIGTYALAVLAAYHHLPFYVAAPWSTVDLATPDGSAIPIEERGDEEVVTLAGQRIAPAGVPARYPAFDVTPEPLVTAIITERGVVRRPFAPGLAALAAR.

Substrate contacts are provided by residues 51–53 (RGA), Arg88, and Gln187. The Proton donor role is filled by Asp228. 238–239 (NK) is a substrate binding site.

This sequence belongs to the eIF-2B alpha/beta/delta subunits family. MtnA subfamily.

The catalysed reaction is 5-(methylsulfanyl)-alpha-D-ribose 1-phosphate = 5-(methylsulfanyl)-D-ribulose 1-phosphate. It participates in amino-acid biosynthesis; L-methionine biosynthesis via salvage pathway; L-methionine from S-methyl-5-thio-alpha-D-ribose 1-phosphate: step 1/6. In terms of biological role, catalyzes the interconversion of methylthioribose-1-phosphate (MTR-1-P) into methylthioribulose-1-phosphate (MTRu-1-P). This Anaeromyxobacter sp. (strain Fw109-5) protein is Methylthioribose-1-phosphate isomerase.